We begin with the raw amino-acid sequence, 739 residues long: Phosphoribosylformylglycinamidine synthase subunit PurL (739 aa).

Residue H49 is part of the active site. ATP is bound by residues Y52 and K91. A Mg(2+)-binding site is contributed by E93. Substrate contacts are provided by residues 94 to 97 and R116; that span reads SHNH. H95 (proton acceptor) is an active-site residue. D117 lines the Mg(2+) pocket. Position 240 (Q240) interacts with substrate. D268 is a Mg(2+) binding site. 312–314 provides a ligand contact to substrate; sequence ESQ. Positions 493 and 530 each coordinate ATP. Residue N531 coordinates Mg(2+). Residue S533 participates in substrate binding.

This sequence belongs to the FGAMS family. As to quaternary structure, monomer. Part of the FGAM synthase complex composed of 1 PurL, 1 PurQ and 2 PurS subunits.

Its subcellular location is the cytoplasm. The catalysed reaction is N(2)-formyl-N(1)-(5-phospho-beta-D-ribosyl)glycinamide + L-glutamine + ATP + H2O = 2-formamido-N(1)-(5-O-phospho-beta-D-ribosyl)acetamidine + L-glutamate + ADP + phosphate + H(+). It participates in purine metabolism; IMP biosynthesis via de novo pathway; 5-amino-1-(5-phospho-D-ribosyl)imidazole from N(2)-formyl-N(1)-(5-phospho-D-ribosyl)glycinamide: step 1/2. Part of the phosphoribosylformylglycinamidine synthase complex involved in the purines biosynthetic pathway. Catalyzes the ATP-dependent conversion of formylglycinamide ribonucleotide (FGAR) and glutamine to yield formylglycinamidine ribonucleotide (FGAM) and glutamate. The FGAM synthase complex is composed of three subunits. PurQ produces an ammonia molecule by converting glutamine to glutamate. PurL transfers the ammonia molecule to FGAR to form FGAM in an ATP-dependent manner. PurS interacts with PurQ and PurL and is thought to assist in the transfer of the ammonia molecule from PurQ to PurL. This is Phosphoribosylformylglycinamidine synthase subunit PurL from Parvibaculum lavamentivorans (strain DS-1 / DSM 13023 / NCIMB 13966).